The primary structure comprises 138 residues: uncharacterized protein (138 aa).

This sequence belongs to the IIV-3 015R family.

This is an uncharacterized protein from Simulium iridescent virus (IIV-22).